The chain runs to 648 residues: Zinc finger protein grt1 (648 aa).

Residues 13–42 (ACENCRKRKVKCSGGDVCFECQKYNENCVY) constitute a DNA-binding region (zn(2)-C6 fungal-type).

In terms of assembly, monomer.

It is found in the nucleus. May be involved in the facilitation of anaphase progression in mitosis. This chain is Zinc finger protein grt1 (grt1), found in Schizosaccharomyces pombe (strain 972 / ATCC 24843) (Fission yeast).